The following is a 178-amino-acid chain: Large ribosomal subunit protein uL6 (178 aa).

This sequence belongs to the universal ribosomal protein uL6 family. As to quaternary structure, part of the 50S ribosomal subunit.

Functionally, this protein binds to the 23S rRNA, and is important in its secondary structure. It is located near the subunit interface in the base of the L7/L12 stalk, and near the tRNA binding site of the peptidyltransferase center. The polypeptide is Large ribosomal subunit protein uL6 (Helicobacter pylori (strain HPAG1)).